A 458-amino-acid chain; its full sequence is Exodeoxyribonuclease 7 large subunit (458 aa).

This sequence belongs to the XseA family. Heterooligomer composed of large and small subunits.

It is found in the cytoplasm. It catalyses the reaction Exonucleolytic cleavage in either 5'- to 3'- or 3'- to 5'-direction to yield nucleoside 5'-phosphates.. Bidirectionally degrades single-stranded DNA into large acid-insoluble oligonucleotides, which are then degraded further into small acid-soluble oligonucleotides. In Escherichia coli O6:H1 (strain CFT073 / ATCC 700928 / UPEC), this protein is Exodeoxyribonuclease 7 large subunit.